We begin with the raw amino-acid sequence, 495 residues long: GTPase Der (495 aa).

EngA-type G domains lie at 3-166 (PVVA…VQDE) and 208-381 (IKLA…ACAT). GTP is bound by residues 9–16 (GRPNVGKS), 56–60 (DTGGI), 118–121 (NKTD), 214–221 (GRPNVGKS), 261–265 (DTAGV), and 326–329 (NKWD). Residues 382–466 (RRVSTAMLTR…PIRIQFKEGE (85 aa)) enclose the KH-like domain.

This sequence belongs to the TRAFAC class TrmE-Era-EngA-EngB-Septin-like GTPase superfamily. EngA (Der) GTPase family. As to quaternary structure, associates with the 50S ribosomal subunit.

GTPase that plays an essential role in the late steps of ribosome biogenesis. The chain is GTPase Der from Pectobacterium carotovorum subsp. carotovorum (strain PC1).